We begin with the raw amino-acid sequence, 399 residues long: Elongation factor Tu (399 aa).

In terms of domain architecture, tr-type G spans 10-204 (KPHVNIGTIG…AVDASIPEPE (195 aa)). The segment at 19-26 (GHVDHGKT) is G1. Residue 19–26 (GHVDHGKT) coordinates GTP. A Mg(2+)-binding site is contributed by T26. Residues 60–64 (GITIN) are G2. A G3 region spans residues 81–84 (DCPG). GTP is bound by residues 81–85 (DCPGH) and 136–139 (NKCD). A G4 region spans residues 136–139 (NKCD). Residues 174-176 (SGL) form a G5 region.

Belongs to the TRAFAC class translation factor GTPase superfamily. Classic translation factor GTPase family. EF-Tu/EF-1A subfamily. In terms of assembly, monomer.

It localises to the cytoplasm. The catalysed reaction is GTP + H2O = GDP + phosphate + H(+). Its function is as follows. GTP hydrolase that promotes the GTP-dependent binding of aminoacyl-tRNA to the A-site of ribosomes during protein biosynthesis. This chain is Elongation factor Tu, found in Prochlorococcus marinus (strain MIT 9313).